Reading from the N-terminus, the 803-residue chain is Protein translocase subunit SecA (803 aa).

ATP is bound by residues glutamine 100, 118–122 (GEGKT), and aspartate 508.

Belongs to the SecA family. As to quaternary structure, monomer and homodimer. Part of the essential Sec protein translocation apparatus which comprises SecA, SecYEG and auxiliary proteins SecDF. Other proteins may also be involved.

It is found in the cell membrane. Its subcellular location is the cytoplasm. The enzyme catalyses ATP + H2O + cellular proteinSide 1 = ADP + phosphate + cellular proteinSide 2.. In terms of biological role, part of the Sec protein translocase complex. Interacts with the SecYEG preprotein conducting channel. Has a central role in coupling the hydrolysis of ATP to the transfer of proteins into and across the cell membrane, serving as an ATP-driven molecular motor driving the stepwise translocation of polypeptide chains across the membrane. The chain is Protein translocase subunit SecA from Leuconostoc mesenteroides subsp. mesenteroides (strain ATCC 8293 / DSM 20343 / BCRC 11652 / CCM 1803 / JCM 6124 / NCDO 523 / NBRC 100496 / NCIMB 8023 / NCTC 12954 / NRRL B-1118 / 37Y).